Consider the following 314-residue polypeptide: Ribosomal RNA small subunit methyltransferase A (314 aa).

Asn29, Val31, Gly56, Glu77, Asp107, and Asn126 together coordinate S-adenosyl-L-methionine. The segment at 291-314 (PKADDAGDDADAQAKADGAQVSTL) is disordered. Over residues 303 to 314 (QAKADGAQVSTL) the composition is skewed to low complexity.

It belongs to the class I-like SAM-binding methyltransferase superfamily. rRNA adenine N(6)-methyltransferase family. RsmA subfamily.

Its subcellular location is the cytoplasm. The enzyme catalyses adenosine(1518)/adenosine(1519) in 16S rRNA + 4 S-adenosyl-L-methionine = N(6)-dimethyladenosine(1518)/N(6)-dimethyladenosine(1519) in 16S rRNA + 4 S-adenosyl-L-homocysteine + 4 H(+). In terms of biological role, specifically dimethylates two adjacent adenosines (A1518 and A1519) in the loop of a conserved hairpin near the 3'-end of 16S rRNA in the 30S particle. May play a critical role in biogenesis of 30S subunits. In Mycolicibacterium gilvum (strain PYR-GCK) (Mycobacterium gilvum (strain PYR-GCK)), this protein is Ribosomal RNA small subunit methyltransferase A.